The chain runs to 181 residues: Adenine phosphoribosyltransferase (181 aa).

This sequence belongs to the purine/pyrimidine phosphoribosyltransferase family. Homodimer.

Its subcellular location is the cytoplasm. The enzyme catalyses AMP + diphosphate = 5-phospho-alpha-D-ribose 1-diphosphate + adenine. The protein operates within purine metabolism; AMP biosynthesis via salvage pathway; AMP from adenine: step 1/1. Functionally, catalyzes a salvage reaction resulting in the formation of AMP, that is energically less costly than de novo synthesis. This chain is Adenine phosphoribosyltransferase, found in Brucella anthropi (strain ATCC 49188 / DSM 6882 / CCUG 24695 / JCM 21032 / LMG 3331 / NBRC 15819 / NCTC 12168 / Alc 37) (Ochrobactrum anthropi).